A 190-amino-acid polypeptide reads, in one-letter code: Hypoxanthine/guanine phosphoribosyltransferase (190 aa).

It belongs to the purine/pyrimidine phosphoribosyltransferase family. Archaeal HPRT subfamily. Homodimer.

It localises to the cytoplasm. It carries out the reaction IMP + diphosphate = hypoxanthine + 5-phospho-alpha-D-ribose 1-diphosphate. The enzyme catalyses GMP + diphosphate = guanine + 5-phospho-alpha-D-ribose 1-diphosphate. It participates in purine metabolism; IMP biosynthesis via salvage pathway; IMP from hypoxanthine: step 1/1. In terms of biological role, catalyzes a salvage reaction resulting in the formation of IMP that is energically less costly than de novo synthesis. In Methanohalophilus mahii (strain ATCC 35705 / DSM 5219 / SLP), this protein is Hypoxanthine/guanine phosphoribosyltransferase.